The following is a 97-amino-acid chain: MSLCIKLLHETQGHIVTMELENGSTYRGKLIEAEDNMNCQMRDISVTARDGRVSHLDQVYIRGSHIRFLIVPDMLRNAPMFKVGPGRSVPLPTRGRR.

The Sm domain occupies 3–75; the sequence is LCIKLLHETQ…IRFLIVPDML (73 aa).

This sequence belongs to the snRNP core protein family. Belongs to the 40S cdc5-associated complex (or cwf complex), a spliceosome sub-complex reminiscent of a late-stage spliceosome composed of the U2, U5 and U6 snRNAs and at least brr2, cdc5, cwf2/prp3, cwf3/syf1, cwf4/syf3, cwf5/ecm2, spp42/cwf6, cwf7/spf27, cwf8, cwf9, cwf10, cwf11, cwf12, prp45/cwf13, cwf14, cwf15, cwf16, cwf17, cwf18, cwf19, cwf20, cwf21, cwf22, cwf23, cwf24, cwf25, cwf26, cyp7/cwf27, cwf28, cwf29/ist3, lea1, msl1, prp5/cwf1, prp10, prp12/sap130, prp17, prp22, sap61, sap62, sap114, sap145, slu7, smb1, smd1, smd3, smf1, smg1 and syf2. Interacts with saf5; the interaction is direct.

The protein localises to the nucleus. It is found in the cytoplasm. The protein resides in the cytosol. In terms of biological role, plays a role in pre-mRNA splicing as a core component of the spliceosomal U1, U2, U4 and U5 small nuclear ribonucleoproteins (snRNPs), the building blocks of the spliceosome. The chain is Small nuclear ribonucleoprotein Sm D3 (smd3) from Schizosaccharomyces pombe (strain 972 / ATCC 24843) (Fission yeast).